Reading from the N-terminus, the 555-residue chain is Glutamine--tRNA ligase (555 aa).

Residues 34–44 (PEPNGYLHIGH) carry the 'HIGH' region motif. ATP-binding positions include 35–37 (EPN) and 41–47 (HIGHAKS). L-glutamine is bound by residues D67 and Y212. Residues T231, 261 to 262 (RL), and 269 to 271 (MSK) each bind ATP. Residues 268–272 (VMSKR) carry the 'KMSKS' region motif. An interaction with tRNA region spans residues 317-324 (TKQDNTIE).

Belongs to the class-I aminoacyl-tRNA synthetase family. As to quaternary structure, monomer.

It localises to the cytoplasm. It catalyses the reaction tRNA(Gln) + L-glutamine + ATP = L-glutaminyl-tRNA(Gln) + AMP + diphosphate. The polypeptide is Glutamine--tRNA ligase (Salmonella choleraesuis (strain SC-B67)).